The primary structure comprises 435 residues: Nuclear distribution protein nudF 2 (435 aa).

The LisH domain maps to 9–41 (QAEELHKSIIAYLSANGLPETTAILRKELGVTE). WD repeat units lie at residues 86-125 (SHRD…LEVT), 128-171 (GHTR…KNIR), 175-214 (GHDH…CVKT), 217-256 (GHTG…ENKL), 280-320 (APLA…LMTL), 322-361 (GHDN…KCVK), 366-396 (THGG…VRQI), and 397-434 (PDVA…QIFA).

It belongs to the WD repeat LIS1/nudF family. In terms of assembly, self-associates. Interacts with nudE and dynein.

The protein localises to the cytoplasm. It is found in the cytoskeleton. The protein resides in the spindle pole. Functionally, positively regulates the activity of the minus-end directed microtubule motor protein dynein. May enhance dynein-mediated microtubule sliding by targeting dynein to the microtubule plus end. Required for nuclear migration during vegetative growth as well as development. Required for retrograde early endosome (EE) transport from the hyphal tip. Required for localization of dynein to the mitotic spindle poles. Recruits additional proteins to the dynein complex at SPBs. This Aspergillus clavatus (strain ATCC 1007 / CBS 513.65 / DSM 816 / NCTC 3887 / NRRL 1 / QM 1276 / 107) protein is Nuclear distribution protein nudF 2.